Reading from the N-terminus, the 165-residue chain is UPF0114 protein in repA1-repA2 intergenic region (165 aa).

The next 3 membrane-spanning stretches (helical) occupy residues 15 to 35 (LMFP…VKFF), 53 to 73 (LVLI…LVMV), and 136 to 156 (IMWC…MAYI).

This sequence belongs to the UPF0114 family.

The protein localises to the cell membrane. This chain is UPF0114 protein in repA1-repA2 intergenic region, found in Buchnera aphidicola subsp. Thelaxes suberi.